The primary structure comprises 74 residues: Brevinin-2Ta (74 aa).

Residues 1 to 22 (MFTMKKSLLLFFFLGTISLSLC) form the signal peptide. The propeptide occupies 23 to 41 (QEERNADEDDGEMTEEEKR). Cys68 and Cys74 are oxidised to a cystine.

It belongs to the frog skin active peptide (FSAP) family. Brevinin subfamily. Expressed by the skin glands.

The protein localises to the secreted. Its function is as follows. Antimicrobial peptide. This chain is Brevinin-2Ta, found in Rana temporaria (European common frog).